We begin with the raw amino-acid sequence, 336 residues long: MTALSSKNCSLQYQLHQSPQLLEASCLLFLIILGKVLLNILLLRVRRGDARWTLMEYFCFSLALVDLLLLVNISILTYFRDFVVLGIRFTRYHICLLTQIISFTYGFLHYPVCSLACIDYWCNLSRASKQSSRWQKLLYFLTVILTWISVLAYVLVDPAISVSLKAHRGYVYQCPAYVSTQSHWLSLSMLMVLFVAFLISWQEVVALLQAMRIASYKSKAALYFPFPLHCGYALSCREALLPRLIVCFLGTWFPFVALQVLILSLRVQIPAYIEMNVPWLYFVNSFLIAAVYWFNCHKLDLRDSSLPVDPFINWKCCFVPVHRLKQVERPMSIVIC.

Residues 1 to 20 lie on the Extracellular side of the membrane; sequence MTALSSKNCSLQYQLHQSPQ. N-linked (GlcNAc...) asparagine glycosylation occurs at Asn8. A helical transmembrane segment spans residues 21–41; the sequence is LLEASCLLFLIILGKVLLNIL. The Cytoplasmic portion of the chain corresponds to 42–56; the sequence is LLRVRRGDARWTLME. A helical transmembrane segment spans residues 57–77; sequence YFCFSLALVDLLLLVNISILT. Over 78–95 the chain is Extracellular; the sequence is YFRDFVVLGIRFTRYHIC. A helical transmembrane segment spans residues 96-116; the sequence is LLTQIISFTYGFLHYPVCSLA. Residues 117–136 are Cytoplasmic-facing; the sequence is CIDYWCNLSRASKQSSRWQK. Residues 137–157 traverse the membrane as a helical segment; that stretch reads LLYFLTVILTWISVLAYVLVD. Over 158–186 the chain is Extracellular; the sequence is PAISVSLKAHRGYVYQCPAYVSTQSHWLS. The chain crosses the membrane as a helical span at residues 187 to 207; that stretch reads LSMLMVLFVAFLISWQEVVAL. Residues 208–243 are Cytoplasmic-facing; it reads LQAMRIASYKSKAALYFPFPLHCGYALSCREALLPR. Residues 244 to 264 traverse the membrane as a helical segment; the sequence is LIVCFLGTWFPFVALQVLILS. The Extracellular portion of the chain corresponds to 265–272; sequence LRVQIPAY. Residues 273–293 form a helical membrane-spanning segment; the sequence is IEMNVPWLYFVNSFLIAAVYW. At 294–336 the chain is on the cytoplasmic side; that stretch reads FNCHKLDLRDSSLPVDPFINWKCCFVPVHRLKQVERPMSIVIC.

Belongs to the G-protein coupled receptor 1 family.

Its subcellular location is the cell membrane. Functionally, orphan receptor. This is Probable G-protein coupled receptor 160 (Gpr160) from Mus musculus (Mouse).